Reading from the N-terminus, the 122-residue chain is Large ribosomal subunit protein bL12 (122 aa).

Belongs to the bacterial ribosomal protein bL12 family. Homodimer. Part of the ribosomal stalk of the 50S ribosomal subunit. Forms a multimeric L10(L12)X complex, where L10 forms an elongated spine to which 2 to 4 L12 dimers bind in a sequential fashion. Binds GTP-bound translation factors.

In terms of biological role, forms part of the ribosomal stalk which helps the ribosome interact with GTP-bound translation factors. Is thus essential for accurate translation. The chain is Large ribosomal subunit protein bL12 from Mycoplasma capricolum subsp. capricolum (strain California kid / ATCC 27343 / NCTC 10154).